The primary structure comprises 128 residues: Leucine-rich single-pass membrane protein 1 (128 aa).

S24 carries the post-translational modification Phosphoserine. Residues G66–I86 form a helical membrane-spanning segment. Positions N90–K111 form a coiled coil.

The protein resides in the membrane. The protein is Leucine-rich single-pass membrane protein 1 (Lsmem1) of Mus musculus (Mouse).